We begin with the raw amino-acid sequence, 301 residues long: Sulfate adenylyltransferase subunit 2 (301 aa).

Positions 279–301 (RQGRLIDRDEAGSMEKKKREGYF) are disordered.

Belongs to the PAPS reductase family. CysD subfamily. Sulfate-activating enzymes, NodP and NodQ, may be physically associated.

It carries out the reaction sulfate + ATP + H(+) = adenosine 5'-phosphosulfate + diphosphate. Functionally, proposed to provide activated sulfate for transfer to nod factor. The sequence is that of Sulfate adenylyltransferase subunit 2 (nodP) from Rhizobium sp. (strain N33).